The sequence spans 152 residues: Protein SprT-like (152 aa).

One can recognise a SprT-like domain in the interval Gln7 to Pro147. His67 is a binding site for Zn(2+). Residue Glu68 is part of the active site. Residue His71 participates in Zn(2+) binding.

The protein belongs to the SprT family. Zn(2+) is required as a cofactor.

The protein resides in the cytoplasm. The sequence is that of Protein SprT-like from Bacillus cereus (strain ATCC 14579 / DSM 31 / CCUG 7414 / JCM 2152 / NBRC 15305 / NCIMB 9373 / NCTC 2599 / NRRL B-3711).